Reading from the N-terminus, the 956-residue chain is DNA replication helicase (956 aa).

Residue 120 to 127 (GTAGAGKT) coordinates ATP. The segment at 658–694 (PINNHVDADSSQGGQSVPVSQRMEHGQEETHDIPCLS) is disordered. A compositionally biased stretch (low complexity) spans 667 to 678 (SSQGGQSVPVSQ). Residues 679 to 694 (RMEHGQEETHDIPCLS) show a composition bias toward basic and acidic residues.

The protein belongs to the herpesviridae helicase family. Associates with the primase and the primase-associated factor to form the helicase-primase complex.

It localises to the host nucleus. Functionally, component of the helicase/primase complex. Unwinds the DNA at the replication forks and generates single-stranded DNA for both leading and lagging strand synthesis. The primase synthesizes short RNA primers on the lagging strand that the polymerase elongates using dNTPs. Possesses helicase-like motifs and therefore may act as the helicase subunit of the complex. The protein is DNA replication helicase of Human cytomegalovirus (strain AD169) (HHV-5).